The chain runs to 127 residues: Membrane-bound lysozyme inhibitor of C-type lysozyme (127 aa).

An N-terminal signal peptide occupies residues 1–18; that stretch reads MKKALWLLLAAVPVVLVA. The N-palmitoyl cysteine moiety is linked to residue Cys-19. Cys-19 is lipidated: S-diacylglycerol cysteine. An intrachain disulfide couples Cys-51 to Cys-124.

Belongs to the MliC family. Type 2 subfamily. In terms of assembly, homodimer.

Its subcellular location is the cell outer membrane. Specifically inhibits C-type lysozymes. The protein is Membrane-bound lysozyme inhibitor of C-type lysozyme of Pseudomonas aeruginosa (strain ATCC 15692 / DSM 22644 / CIP 104116 / JCM 14847 / LMG 12228 / 1C / PRS 101 / PAO1).